The following is a 358-amino-acid chain: Molybdenum import ATP-binding protein ModC 2 (358 aa).

Positions 1 to 234 constitute an ABC transporter domain; the sequence is MPEQGIEAQL…PRLPLNHPDE (234 aa). ATP is bound at residue 35–42; sequence GRSGSGKT. A Mop domain is found at 293–358; it reads NSSILNILRV…AQIKSVALME (66 aa).

Belongs to the ABC transporter superfamily. Molybdate importer (TC 3.A.1.8) family. In terms of assembly, the complex is composed of two ATP-binding proteins (ModC), two transmembrane proteins (ModB) and a solute-binding protein (ModA).

The protein resides in the cell inner membrane. It catalyses the reaction molybdate(out) + ATP + H2O = molybdate(in) + ADP + phosphate + H(+). Functionally, part of the ABC transporter complex ModABC involved in molybdenum import. Responsible for energy coupling to the transport system. This is Molybdenum import ATP-binding protein ModC 2 from Azotobacter vinelandii.